A 260-amino-acid polypeptide reads, in one-letter code: UPF0246 protein BceJ2315_22780 (260 aa).

The protein belongs to the UPF0246 family.

This Burkholderia cenocepacia (strain ATCC BAA-245 / DSM 16553 / LMG 16656 / NCTC 13227 / J2315 / CF5610) (Burkholderia cepacia (strain J2315)) protein is UPF0246 protein BceJ2315_22780.